The sequence spans 120 residues: Ribonuclease P protein component (120 aa).

It belongs to the RnpA family. As to quaternary structure, consists of a catalytic RNA component (M1 or rnpB) and a protein subunit.

It carries out the reaction Endonucleolytic cleavage of RNA, removing 5'-extranucleotides from tRNA precursor.. In terms of biological role, RNaseP catalyzes the removal of the 5'-leader sequence from pre-tRNA to produce the mature 5'-terminus. It can also cleave other RNA substrates such as 4.5S RNA. The protein component plays an auxiliary but essential role in vivo by binding to the 5'-leader sequence and broadening the substrate specificity of the ribozyme. This Chelativorans sp. (strain BNC1) protein is Ribonuclease P protein component.